A 437-amino-acid chain; its full sequence is Anhydromevalonate phosphate decarboxylase (437 aa).

Positions 136 and 199 each coordinate Mn(2+). The active-site Proton acceptor is Asp247.

This sequence belongs to the UbiD family. Prenylated FMN is required as a cofactor. The cofactor is Mn(2+).

It carries out the reaction (2E)-3-methyl-5-phosphooxypent-2-enoate + H(+) = isopentenyl phosphate + CO2. The protein operates within isoprenoid biosynthesis; isopentenyl diphosphate biosynthesis via mevalonate pathway. Catalyzes the conversion of trans-anhydromevalonate 5-phosphate (tAHMP) into isopentenyl phosphate. Involved in the archaeal mevalonate (MVA) pathway, which provides fundamental precursors for isoprenoid biosynthesis, such as isopentenyl diphosphate (IPP) and dimethylallyl diphosphate (DMAPP). The protein is Anhydromevalonate phosphate decarboxylase of Aeropyrum pernix (strain ATCC 700893 / DSM 11879 / JCM 9820 / NBRC 100138 / K1).